The primary structure comprises 471 residues: Argininosuccinate lyase (471 aa).

The protein belongs to the lyase 1 family. Argininosuccinate lyase subfamily.

The protein resides in the cytoplasm. It carries out the reaction 2-(N(omega)-L-arginino)succinate = fumarate + L-arginine. It participates in amino-acid biosynthesis; L-arginine biosynthesis; L-arginine from L-ornithine and carbamoyl phosphate: step 3/3. The sequence is that of Argininosuccinate lyase from Ehrlichia canis (strain Jake).